Consider the following 375-residue polypeptide: MTKLESLLHASTGLSLISGYLMYNRRYLLSFDKKREGETTQSISVIIPARNEEKRLPKLLKSLSQQSMRVECIVMDDDSNDRTAEIAREMGAKVYNVTYDNNGNTWIGKSYACYLGASYTVSDILIFMDADVELNNEHALEAIIQSYARQQYRGLMSIQPYHVVYKPYEHLSAMFNLMTVVGTNSFSTLSKSKGESLAFGPVTVMNKSDYILTQGHKNAASHIIEGFSLGKAFQRCQLPVTRFEGQGFVSFRMYEAGFKTMIEGWTKHLAVGASSTQPHIMMLIILWMVGCITSFSGLALSLFMKTLSFKRMALSYSLYTLQFIRLHRRVGRFSILFLAINSILFLVFILVYINSYRHIHYTKQVKWKGRQFSIK.

4 helical membrane passes run 7–23, 112–132, 280–300, and 333–353; these read LLHASTGLSLISGYLMY, ACYLGASYTVSDILIFMDADV, IMMLIILWMVGCITSFSGLAL, and FSILFLAINSILFLVFILVYI.

It belongs to the glycosyltransferase 2 family. CrtQ subfamily.

The protein resides in the cell membrane. It participates in carotenoid biosynthesis; staphyloxanthin biosynthesis; staphyloxanthin from farnesyl diphosphate: step 4/5. Catalyzes the glycosylation of 4,4'-diaponeurosporenoate, i.e. the esterification of glucose at the C1'' position with the carboxyl group of 4,4'-diaponeurosporenic acid, to form glycosyl-4,4'-diaponeurosporenoate. This is a step in the biosynthesis of staphyloxanthin, an orange pigment present in most staphylococci strains. This is 4,4'-diaponeurosporenoate glycosyltransferase (crtQ) from Staphylococcus haemolyticus (strain JCSC1435).